The chain runs to 201 residues: uncharacterized protein (201 aa).

The segment at Met1–Gly22 is disordered.

This is an uncharacterized protein from Tomato ringspot virus (isolate raspberry) (ToRSV).